Consider the following 442-residue polypeptide: Lipoyl synthase, apicoplast (442 aa).

Residues 1-23 form the signal peptide; the sequence is MRVLTPSLYIYAFFIFCVRFKCG. The tract at residues 104–154 is disordered; that stretch reads LGEHQLKGKRKESATNVEKEKKEKEQQEERLPVPKVGNKMPEKKPDWFHVP. The segment covering 114–135 has biased composition (basic and acidic residues); it reads KESATNVEKEKKEKEQQEERLP. [4Fe-4S] cluster-binding residues include C177, C182, C188, C203, C207, C210, and S418. In terms of domain architecture, Radical SAM core spans 189 to 407; it reads WNIGTATIML…KEEGMKMGFK (219 aa).

It belongs to the radical SAM superfamily. Lipoyl synthase family. It depends on [4Fe-4S] cluster as a cofactor.

The protein resides in the plastid. Its subcellular location is the apicoplast. It carries out the reaction [[Fe-S] cluster scaffold protein carrying a second [4Fe-4S](2+) cluster] + N(6)-octanoyl-L-lysyl-[protein] + 2 oxidized [2Fe-2S]-[ferredoxin] + 2 S-adenosyl-L-methionine + 4 H(+) = [[Fe-S] cluster scaffold protein] + N(6)-[(R)-dihydrolipoyl]-L-lysyl-[protein] + 4 Fe(3+) + 2 hydrogen sulfide + 2 5'-deoxyadenosine + 2 L-methionine + 2 reduced [2Fe-2S]-[ferredoxin]. It functions in the pathway protein modification; protein lipoylation via endogenous pathway; protein N(6)-(lipoyl)lysine from octanoyl-[acyl-carrier-protein]: step 2/2. In terms of biological role, catalyzes the radical-mediated insertion of two sulfur atoms into the C-6 and C-8 positions of the octanoyl moiety bound to the lipoyl domains of lipoate-dependent enzymes, thereby converting the octanoylated domains into lipoylated derivatives. The polypeptide is Lipoyl synthase, apicoplast (Plasmodium knowlesi (strain H)).